A 715-amino-acid chain; its full sequence is Serine/arginine repetitive matrix protein 5 (715 aa).

The segment covering Met-1 to Ser-13 has biased composition (low complexity). Residues Met-1 to Ala-715 are disordered. The segment covering Leu-32–Pro-59 has biased composition (polar residues). Low complexity predominate over residues Ser-60–Ser-79. The segment covering Ser-80–Thr-90 has biased composition (basic residues). The span at Ser-92 to Ser-104 shows a compositional bias: polar residues. A compositionally biased stretch (basic residues) spans His-112–Pro-136. 2 stretches are compositionally biased toward polar residues: residues Thr-213–Gly-224 and Tyr-257–Ala-272. The span at Ser-273 to Arg-285 shows a compositional bias: low complexity. Residues Ser-286–Lys-320 are compositionally biased toward basic residues. Basic and acidic residues-rich tracts occupy residues Pro-359 to Gly-388 and Lys-397 to His-521. Basic residues predominate over residues Arg-522–Ser-536. Composition is skewed to basic and acidic residues over residues Pro-539 to Arg-595 and Ser-611 to Asn-628. The span at Thr-657–Arg-666 shows a compositional bias: polar residues. Positions Thr-667–Ser-681 are enriched in low complexity. Residues Gly-682–Ala-715 show a composition bias toward polar residues.

The polypeptide is Serine/arginine repetitive matrix protein 5 (SRRM5) (Homo sapiens (Human)).